The chain runs to 297 residues: Ketohexokinase (297 aa).

Residues Asp15, Gly41, Asn42, and Asn45 each contribute to the beta-D-fructose site. ATP-binding positions include Arg107, 225-228 (AEEG), and 254-257 (GAGD). Asp257 contributes to the beta-D-fructose binding site.

It belongs to the carbohydrate kinase PfkB family. In terms of assembly, homodimer.

The catalysed reaction is beta-D-fructose + ATP = beta-D-fructose 1-phosphate + ADP + H(+). Its pathway is carbohydrate metabolism; fructose metabolism. Requires potassium. Inhibition by ADP. Its function is as follows. Catalyzes the phosphorylation of the ketose sugar fructose to fructose-1-phosphate. This is Ketohexokinase (KHK) from Pongo abelii (Sumatran orangutan).